The sequence spans 71 residues: BBSome-interacting protein 1 (71 aa).

This sequence belongs to the BBIP10 family.

The protein localises to the cell projection. Its subcellular location is the cilium. The protein resides in the cytoplasm. Functionally, required for primary cilia assembly. The sequence is that of BBSome-interacting protein 1 (bbip1) from Nematostella vectensis (Starlet sea anemone).